The chain runs to 344 residues: L-rhamnose-proton symporter (344 aa).

10 helical membrane passes run 4 to 24 (AITM…CFYA), 38 to 58 (WSVG…ALLL), 74 to 94 (LPVF…GLTM), 101 to 121 (MGIG…TPII), 137 to 157 (TLLG…AGQL), 175 to 195 (LVLA…MNAA), 214 to 234 (LPSY…FCFI), 259 to 279 (VLLS…YAWG), 290 to 310 (ISWM…GLVL), and 323 to 343 (VLSL…IGMA).

The protein belongs to the L-rhamnose transporter (TC 2.A.7.6) family.

The protein resides in the cell inner membrane. It catalyses the reaction L-rhamnopyranose(in) + H(+)(in) = L-rhamnopyranose(out) + H(+)(out). In terms of biological role, uptake of L-rhamnose across the cytoplasmic membrane with the concomitant transport of protons into the cell (symport system). The polypeptide is L-rhamnose-proton symporter (Escherichia coli (strain K12 / MC4100 / BW2952)).